We begin with the raw amino-acid sequence, 115 residues long: Putative UPF0377 protein YHL045W (115 aa).

Residues A10–V30 traverse the membrane as a helical segment.

This sequence belongs to the UPF0377 family.

It localises to the membrane. In Saccharomyces cerevisiae (strain ATCC 204508 / S288c) (Baker's yeast), this protein is Putative UPF0377 protein YHL045W.